A 440-amino-acid polypeptide reads, in one-letter code: NK1 transcription factor-related protein 1 (440 aa).

Positions 1-13 are enriched in low complexity; the sequence is MSTSGPAAPGDVP. Disordered stretches follow at residues 1 to 82, 145 to 291, and 342 to 387; these read MSTS…RPTS, GVAA…PRRA, and KWKK…PMGA. Residues 14–31 show a composition bias toward pro residues; that stretch reads ALPPPPPGPGSGPAPPAP. Composition is skewed to low complexity over residues 62–74 and 145–158; these read VPAV…AARP and GVAA…TSAG. Positions 170-181 are enriched in polar residues; it reads GYSSGSGRSPTA. The segment covering 182–198 has biased composition (acidic residues); it reads DSEDEAPEDEDEEEAPE. Over residues 210-222 the composition is skewed to gly residues; it reads GGSGGLGARGSGC. Positions 237–269 are enriched in low complexity; sequence AAPGPRGNSPGAPGPPATATGAGSAGSTPQGAA. The homeobox DNA-binding region spans 288–347; that stretch reads PRRARTAFTYEQLVALENKFKATRYLSVCERLNLALSLSLTETQVKIWFQNRRTKWKKQN. The span at 356 to 374 shows a compositional bias: gly residues; sequence TGGGGGPGPGAGPGAGLPG.

This sequence belongs to the NK-1 homeobox family.

The protein localises to the nucleus. Its function is as follows. May be required for the coordinated crosstalk of factors involved in the maintenance of energy homeostasis, possibly by regulating the transcription of specific factors involved in energy balance. This is NK1 transcription factor-related protein 1 from Mus musculus (Mouse).